Here is a 542-residue protein sequence, read N- to C-terminus: CTP synthase (542 aa).

The amidoligase domain stretch occupies residues 1–265; sequence MARYIFITGG…DQEVLAAFGI (265 aa). Ser-13 is a CTP binding site. A UTP-binding site is contributed by Ser-13. 14–19 serves as a coordination point for ATP; that stretch reads SLGKGL. Position 54 (Tyr-54) interacts with L-glutamine. Residue Asp-71 participates in ATP binding. 2 residues coordinate Mg(2+): Asp-71 and Glu-139. Residues 146–148, 186–191, and Lys-222 contribute to the CTP site; these read DIE and KTKPTQ. Residues 186-191 and Lys-222 contribute to the UTP site; that span reads KTKPTQ. 238–240 lines the ATP pocket; the sequence is RDV. In terms of domain architecture, Glutamine amidotransferase type-1 spans 291–541; it reads TIAIVGKYTG…IAAALEQSRL (251 aa). L-glutamine is bound at residue Gly-353. Residue Cys-380 is the Nucleophile; for glutamine hydrolysis of the active site. Residues 381-384, Glu-404, and Arg-469 contribute to the L-glutamine site; that span reads FGMQ. Residues His-514 and Glu-516 contribute to the active site.

It belongs to the CTP synthase family. As to quaternary structure, homotetramer.

The enzyme catalyses UTP + L-glutamine + ATP + H2O = CTP + L-glutamate + ADP + phosphate + 2 H(+). It carries out the reaction L-glutamine + H2O = L-glutamate + NH4(+). It catalyses the reaction UTP + NH4(+) + ATP = CTP + ADP + phosphate + 2 H(+). Its pathway is pyrimidine metabolism; CTP biosynthesis via de novo pathway; CTP from UDP: step 2/2. Allosterically activated by GTP, when glutamine is the substrate; GTP has no effect on the reaction when ammonia is the substrate. The allosteric effector GTP functions by stabilizing the protein conformation that binds the tetrahedral intermediate(s) formed during glutamine hydrolysis. Inhibited by the product CTP, via allosteric rather than competitive inhibition. Its function is as follows. Catalyzes the ATP-dependent amination of UTP to CTP with either L-glutamine or ammonia as the source of nitrogen. Regulates intracellular CTP levels through interactions with the four ribonucleotide triphosphates. This chain is CTP synthase, found in Methylocella silvestris (strain DSM 15510 / CIP 108128 / LMG 27833 / NCIMB 13906 / BL2).